A 330-amino-acid chain; its full sequence is Phosphate acyltransferase (330 aa).

This sequence belongs to the PlsX family. In terms of assembly, homodimer. Probably interacts with PlsY.

It localises to the cytoplasm. The enzyme catalyses a fatty acyl-[ACP] + phosphate = an acyl phosphate + holo-[ACP]. It functions in the pathway lipid metabolism; phospholipid metabolism. In terms of biological role, catalyzes the reversible formation of acyl-phosphate (acyl-PO(4)) from acyl-[acyl-carrier-protein] (acyl-ACP). This enzyme utilizes acyl-ACP as fatty acyl donor, but not acyl-CoA. The protein is Phosphate acyltransferase of Bacillus cereus (strain G9842).